The primary structure comprises 411 residues: LL-diaminopimelate aminotransferase (411 aa).

Residues Y15 and G42 each contribute to the substrate site. Residues Y72, 105-106 (SK), Y129, N186, Y217, and 245-247 (SFS) contribute to the pyridoxal 5'-phosphate site. Positions 106, 129, and 186 each coordinate substrate. Position 248 is an N6-(pyridoxal phosphate)lysine (K248). Positions 256 and 287 each coordinate pyridoxal 5'-phosphate. Residues N287 and R382 each contribute to the substrate site.

The protein belongs to the class-I pyridoxal-phosphate-dependent aminotransferase family. LL-diaminopimelate aminotransferase subfamily. Homodimer. The cofactor is pyridoxal 5'-phosphate.

The catalysed reaction is (2S,6S)-2,6-diaminopimelate + 2-oxoglutarate = (S)-2,3,4,5-tetrahydrodipicolinate + L-glutamate + H2O + H(+). It participates in amino-acid biosynthesis; L-lysine biosynthesis via DAP pathway; LL-2,6-diaminopimelate from (S)-tetrahydrodipicolinate (aminotransferase route): step 1/1. Involved in the synthesis of meso-diaminopimelate (m-DAP or DL-DAP), required for both lysine and peptidoglycan biosynthesis. Catalyzes the direct conversion of tetrahydrodipicolinate to LL-diaminopimelate. Is also able to use meso-diaminopimelate, lysine or ornithine as substrates. The protein is LL-diaminopimelate aminotransferase of Protochlamydia amoebophila (strain UWE25).